Reading from the N-terminus, the 229-residue chain is Transcriptional activator protein YukR (229 aa).

Residues 157-222 enclose the HTH luxR-type domain; it reads DTSGKGILSP…QAIRLGVELE (66 aa). Positions 181 to 200 form a DNA-binding region, H-T-H motif; that stretch reads YPEIALIAGITTRTVKHHMG.

It belongs to the autoinducer-regulated transcriptional regulatory protein family.

Its function is as follows. Probable transcriptional activator. Binds to an autoinducer molecule. The protein is Transcriptional activator protein YukR (yukR) of Yersinia ruckeri.